A 120-amino-acid polypeptide reads, in one-letter code: Immunoglobulin kappa variable 2-24 (120 aa).

The first 19 residues, 1–19, serve as a signal peptide directing secretion; that stretch reads MRLLAQLLGLLMLWVPGSS. The 101-residue stretch at 20-120 folds into the Ig-like domain; the sequence is GDIVMTQTPL…YYCMQATQFP (101 aa). The tract at residues 21–43 is framework-1; that stretch reads DIVMTQTPLSSPVTLGQPASISC. Residues C43 and C113 are joined by a disulfide bond. The interval 44–59 is complementarity-determining-1; sequence RSSQSLVHSDGNTYLS. Residues 60–74 are framework-2; the sequence is WLQQRPGQPPRLLIY. The interval 75–81 is complementarity-determining-2; sequence KISNRFS. The framework-3 stretch occupies residues 82–113; that stretch reads GVPDRFSGSGAGTDFTLKISRVEAEDVGVYYC. The complementarity-determining-3 stretch occupies residues 114–120; the sequence is MQATQFP.

As to quaternary structure, immunoglobulins are composed of two identical heavy chains and two identical light chains; disulfide-linked.

It localises to the secreted. The protein resides in the cell membrane. In terms of biological role, v region of the variable domain of immunoglobulin light chains that participates in the antigen recognition. Immunoglobulins, also known as antibodies, are membrane-bound or secreted glycoproteins produced by B lymphocytes. In the recognition phase of humoral immunity, the membrane-bound immunoglobulins serve as receptors which, upon binding of a specific antigen, trigger the clonal expansion and differentiation of B lymphocytes into immunoglobulins-secreting plasma cells. Secreted immunoglobulins mediate the effector phase of humoral immunity, which results in the elimination of bound antigens. The antigen binding site is formed by the variable domain of one heavy chain, together with that of its associated light chain. Thus, each immunoglobulin has two antigen binding sites with remarkable affinity for a particular antigen. The variable domains are assembled by a process called V-(D)-J rearrangement and can then be subjected to somatic hypermutations which, after exposure to antigen and selection, allow affinity maturation for a particular antigen. The polypeptide is Immunoglobulin kappa variable 2-24 (Homo sapiens (Human)).